The chain runs to 633 residues: Proline-rich receptor-like protein kinase PERK4 (633 aa).

Residues 1 to 29 are compositionally biased toward low complexity; it reads MASSPESAPPTNSTSSPSPPSNTNSTTSS. Positions 1–145 are disordered; sequence MASSPESAPP…GSSGGGGGGR (145 aa). Over 1 to 151 the chain is Extracellular; it reads MASSPESAPP…GGGRSNTNTA (151 aa). N-linked (GlcNAc...) asparagine glycans are attached at residues Asn12 and Asn24. Pro residues-rich tracts occupy residues 30–41 and 48–65; these read PPAPSPPSPTPP and SPPP…PNPP. Asn66 is a glycosylation site (N-linked (GlcNAc...) asparagine). Over residues 77-90 the composition is skewed to gly residues; it reads QGGGGERGNGGNNG. Positions 106 to 135 are enriched in low complexity; it reads SRSNGDNGGSRSSPPGDTGGSRSDNPPSSG. The segment covering 136 to 145 has biased composition (gly residues); that stretch reads GSSGGGGGGR. Residues 152 to 172 form a helical membrane-spanning segment; sequence IIVGVLVGAGLLMIVLIIVCL. Residues 173–633 lie on the Cytoplasmic side of the membrane; that stretch reads RRKKKRKDSF…MGTKSPTPPK (461 aa). The segment covering 193–222 has biased composition (low complexity); the sequence is QYYGNNNNNNASQNYPNWHLNSQGQNQQST. Residues 193–255 are disordered; it reads QYYGNNNNNN…SMYSGPSRPV (63 aa). Position 273 is a phosphothreonine (Thr273). Residues 284–562 enclose the Protein kinase domain; it reads FTDANLLGQG…VRALEGEVSL (279 aa). ATP-binding positions include 290-298 and Lys312; that span reads LGQGGFGYV. Phosphotyrosine is present on Tyr357. Asp408 functions as the Proton acceptor in the catalytic mechanism. Ser441 carries the post-translational modification Phosphoserine. Phosphothreonine occurs at positions 442 and 447. At Tyr455 the chain carries Phosphotyrosine. A compositionally biased stretch (polar residues) spans 608 to 619; it reads FPVSDCEGTSSN. The interval 608 to 633 is disordered; sequence FPVSDCEGTSSNDSRDMGTKSPTPPK.

This sequence belongs to the protein kinase superfamily. Ser/Thr protein kinase family. In terms of tissue distribution, mostly expressed in inflorescence bolts. Also present in roots, stems, germinated seeds, cotyledons, pollen, stamen and stigma.

It localises to the cell membrane. The catalysed reaction is L-seryl-[protein] + ATP = O-phospho-L-seryl-[protein] + ADP + H(+). It catalyses the reaction L-threonyl-[protein] + ATP = O-phospho-L-threonyl-[protein] + ADP + H(+). With respect to regulation, activated by ABA and Ca(2+). Functionally, required during abscisic acid (ABA)-mediated activation of Ca(2+) channels. Regulates ABA signaling pathways. Modulates the expression of genes related to cell elongation and ABA signaling during root growth. This Arabidopsis thaliana (Mouse-ear cress) protein is Proline-rich receptor-like protein kinase PERK4 (PERK4).